The chain runs to 207 residues: Early nodulin-like protein 11 (207 aa).

The first 24 residues, M1–A24, serve as a signal peptide directing secretion. Positions R25–S130 constitute a Phytocyanin domain. N43 is a glycosylation site (N-linked (GlcNAc...) asparagine). C83 and C118 are joined by a disulfide. The disordered stretch occupies residues Q129–A179. A compositionally biased stretch (pro residues) spans T144 to S164. Low complexity predominate over residues P165 to A179. S181 carries the GPI-anchor amidated serine lipid modification. A propeptide spans S182–A207 (removed in mature form).

The protein belongs to the early nodulin-like (ENODL) family. As to expression, confined to flowers and siliques.

It localises to the cell membrane. Its function is as follows. May act as a carbohydrate transporter. Required, together with ENODL11, ENODL12, ENODL13, ENODL14 and ENODL15, for male-female communication and pollen tube reception and burst at the synergid cell surface of the female gametophyte. In Arabidopsis thaliana (Mouse-ear cress), this protein is Early nodulin-like protein 11.